The chain runs to 241 residues: Small ribosomal subunit protein uS2 (241 aa).

This sequence belongs to the universal ribosomal protein uS2 family.

In Salmonella choleraesuis (strain SC-B67), this protein is Small ribosomal subunit protein uS2.